A 415-amino-acid polypeptide reads, in one-letter code: UDP-N-acetylglucosamine 1-carboxyvinyltransferase 1 (415 aa).

A phosphoenolpyruvate-binding site is contributed by 23 to 24; it reads KN. A UDP-N-acetyl-alpha-D-glucosamine-binding site is contributed by R92. The active-site Proton donor is the C116. C116 carries the 2-(S-cysteinyl)pyruvic acid O-phosphothioketal modification. UDP-N-acetyl-alpha-D-glucosamine is bound by residues 121–125, D304, and V326; that span reads RPIDL.

The protein belongs to the EPSP synthase family. MurA subfamily.

It localises to the cytoplasm. The enzyme catalyses phosphoenolpyruvate + UDP-N-acetyl-alpha-D-glucosamine = UDP-N-acetyl-3-O-(1-carboxyvinyl)-alpha-D-glucosamine + phosphate. Its pathway is cell wall biogenesis; peptidoglycan biosynthesis. Its function is as follows. Cell wall formation. Adds enolpyruvyl to UDP-N-acetylglucosamine. The chain is UDP-N-acetylglucosamine 1-carboxyvinyltransferase 1 from Caldanaerobacter subterraneus subsp. tengcongensis (strain DSM 15242 / JCM 11007 / NBRC 100824 / MB4) (Thermoanaerobacter tengcongensis).